We begin with the raw amino-acid sequence, 932 residues long: Transcription initiation factor TFIID subunit 3 (932 aa).

Disordered regions lie at residues 130 to 201 (PIVS…LSTK), 213 to 347 (REPL…PSAM), 403 to 465 (REPD…DNSW), and 480 to 579 (LGAP…PWRE). A compositionally biased stretch (acidic residues) spans 158 to 171 (LEEDDEMEEEEVIN). A phosphoserine mark is found at Ser-183, Ser-199, Ser-229, and Ser-243. The residue at position 266 (Lys-266) is an N6-acetyllysine. The segment covering 266 to 283 (KSFTPKTKTKASSPGQKT) has biased composition (polar residues). Phosphoserine occurs at positions 291, 297, and 301. The span at 408 to 423 (FEFSSGSESEGDTFTS) shows a compositional bias: low complexity. Residues 436 to 446 (KASTSSNNFTK) show a composition bias toward polar residues. Positions 447–461 (SLATPLPLSSGTSSS) are enriched in low complexity. Position 502 is a phosphothreonine (Thr-502). Basic and acidic residues predominate over residues 505–515 (PLHKGYEEKAK). Residues 524-538 (KKLKKELKTKLKKKE) show a composition bias toward basic residues. The span at 539–579 (KQRDRERERERNKERSKEKDKMREREKEKEAGKELKYPWRE) shows a compositional bias: basic and acidic residues. Residue Lys-582 forms a Glycyl lysine isopeptide (Lys-Gly) (interchain with G-Cter in SUMO2) linkage. A disordered region spans residues 607–657 (KDGIVRREREKHKDKKKDRERSKREKDKRERERLKEKNREDKIKAPPTQLV). The segment covering 623–650 (KDRERSKREKDKRERERLKEKNREDKIK) has biased composition (basic and acidic residues). Ser-669 bears the Phosphoserine mark. Residues 681-746 (AFSPMLPEKL…EKEKEKHKHE (66 aa)) are disordered. Basic and acidic residues predominate over residues 689-702 (KLFEEKEKPKEKER). Positions 703-714 (KKDKKEKKKKKE) are enriched in basic residues. Positions 715 to 740 (KEKEKEKKEREREKERREREKREKEK) are enriched in basic and acidic residues. Lys-749 participates in a covalent cross-link: Glycyl lysine isopeptide (Lys-Gly) (interchain with G-Cter in SUMO2). Ser-758 is subject to Phosphoserine. Lys-779 is subject to N6-acetyllysine. A PHD-type zinc finger spans residues 867–917 (IWICPGCNKPDDGSPMIGCDDCDDWYHWPCVGIMAAPPEEMQWFCPKCANK).

Belongs to the TAF3 family. Component of the TFIID basal transcription factor complex, composed of TATA-box-binding protein TBP, and a number of TBP-associated factors (TAFs), including TAF1, TAF2, TAF3, TAF4, TAF5, TAF6, TAF7, TAF8, TAF9, TAF10, TAF11, TAF12 and TAF13. Interacts with TAF10 via histone fold. Interacts with TAF13, TBP, SAP130 and GCN5L2. Interacts with TBPL2.

It localises to the nucleus. In terms of biological role, the TFIID basal transcription factor complex plays a major role in the initiation of RNA polymerase II (Pol II)-dependent transcription. TFIID recognizes and binds promoters with or without a TATA box via its subunit TBP, a TATA-box-binding protein, and promotes assembly of the pre-initiation complex (PIC). The TFIID complex consists of TBP and TBP-associated factors (TAFs), including TAF1, TAF2, TAF3, TAF4, TAF5, TAF6, TAF7, TAF8, TAF9, TAF10, TAF11, TAF12 and TAF13. The TFIID complex structure can be divided into 3 modules TFIID-A, TFIID-B, and TFIID-C. TAF3 forms the TFIID-A module together with TAF5 and TBP. Required in complex with TBPL2 for the differentiation of myoblasts into myocytes. The TAF3-TBPL2 complex replaces TFIID at specific promoters at an early stage in the differentiation process. The sequence is that of Transcription initiation factor TFIID subunit 3 (Taf3) from Mus musculus (Mouse).